The sequence spans 301 residues: Homoserine O-acetyltransferase (301 aa).

Residue Cys142 is the Acyl-thioester intermediate of the active site. Lys163 and Ser192 together coordinate substrate. His235 (proton acceptor) is an active-site residue. Glu237 is an active-site residue. Arg249 lines the substrate pocket.

The protein belongs to the MetA family.

It is found in the cytoplasm. The catalysed reaction is L-homoserine + acetyl-CoA = O-acetyl-L-homoserine + CoA. The protein operates within amino-acid biosynthesis; L-methionine biosynthesis via de novo pathway; O-acetyl-L-homoserine from L-homoserine: step 1/1. In terms of biological role, transfers an acetyl group from acetyl-CoA to L-homoserine, forming acetyl-L-homoserine. In Novosphingobium aromaticivorans (strain ATCC 700278 / DSM 12444 / CCUG 56034 / CIP 105152 / NBRC 16084 / F199), this protein is Homoserine O-acetyltransferase.